The following is a 496-amino-acid chain: Galactokinase (496 aa).

Position 2 is an N-acetylalanine (A2). Residues R56, E62, H63, and D65 each contribute to the alpha-D-galactose site. 4 residues coordinate ATP: G161, G163, S165, and S166. D210 serves as a coordination point for alpha-D-galactose. Catalysis depends on D210, which acts as the Proton acceptor. Positions 252, 253, and 254 each coordinate ATP. Y262 serves as a coordination point for alpha-D-galactose.

The protein belongs to the GHMP kinase family. GalK subfamily. The cofactor is Mg(2+). It depends on Mn(2+) as a cofactor. Ca(2+) serves as cofactor. Expressed in roots, stems, leaves, flowers and young siliques. Higher expression in the elongating middle stem region than in the lower or upper stem region.

It catalyses the reaction alpha-D-galactose + ATP = alpha-D-galactose 1-phosphate + ADP + H(+). It participates in carbohydrate metabolism; galactose metabolism. Functionally, sugar-1-kinase with a very high substrate specificity for the alpha-anomeric configuration of D-galacose (D-Gal). Also efficiently converts 2-deoxy-D-Gal to 2-deoxy-D-al-1-phosphate. The sequence is that of Galactokinase (GAL1) from Arabidopsis thaliana (Mouse-ear cress).